The following is a 38-amino-acid chain: Large ribosomal subunit protein bL36c (38 aa).

It belongs to the bacterial ribosomal protein bL36 family.

Its subcellular location is the plastid. The protein localises to the apicoplast. This is Large ribosomal subunit protein bL36c (rpl36) from Theileria parva (East coast fever infection agent).